A 62-amino-acid polypeptide reads, in one-letter code: Large ribosomal subunit protein eL24 (62 aa).

The Zn(2+) site is built by Cys7, Cys10, Cys33, and Cys37. The C4-type zinc-finger motif lies at 7–37 (CSFCGKDILPGTGLMYVRNDGSLLWFCSSKC).

Belongs to the eukaryotic ribosomal protein eL24 family. In terms of assembly, part of the 50S ribosomal subunit. Forms a cluster with proteins L3 and L14. Requires Zn(2+) as cofactor.

Functionally, binds to the 23S rRNA. This chain is Large ribosomal subunit protein eL24, found in Sulfolobus acidocaldarius (strain ATCC 33909 / DSM 639 / JCM 8929 / NBRC 15157 / NCIMB 11770).